The sequence spans 533 residues: MLHPLLRHLPLALALALCAAGAAQAKNLVVCTEASPEGFDIVQYTGAVTADASAETVFNRLLAFRPGTTEVIPGLAERWDVSADGLSYTFHLRPGVKFHTTDYFKPTRSLNADDVLWTFQRALDPKHPWHASALRGYAYFDAMGMGELIKSVEKVDELTVRFVLNRPEAPFLRDMAMPFASIYSAEYGDQLLAAGKQGQLNNQPIGTGPFVFKRYAKDAQVRYTANPDYYAGKPPIDNLVFAITLDPNVRMQKVRAGECQVSLYPKPEDVPRLKQDPNLAVDEIDALLTTYIAINTQHKPLDDPRVRQAINLALDKKAMLDAVFGPGAASPAVGPYPPTLLGYNHSIQDWPHDPERARALLKEAGAENLRITLFIRNGTSPTIPNPALAAQMLQADLAKAGIQLTIRSLEWGELLKRSKAGEHDLSLLGWAGDNGDPDNFLSPNLSCAAAESGENQARWCDKDFEALMRKAREVSDPAERAKLYEQAQVVFHEQAPWIPLAYPKLFNVRRNTVQGYVINPLSNNNFATTSVKP.

A signal peptide spans 1–25 (MLHPLLRHLPLALALALCAAGAAQA).

This sequence belongs to the bacterial solute-binding protein 5 family. The complex is composed of two ATP-binding proteins (DppD and DppF), two transmembrane proteins (DppB and DppC) and a solute-binding protein (DppA4). Five orthologous SBPs (DppA1-A5) are present in P.aeruginosa, which increases the substrate specificity of the DppBCDF transporter.

Part of the ABC transporter DppABCDF involved in the uptake of various di/tripeptides. Prefers dipeptides with acidic residues at the C-terminal end. Efficiently uses tripeptides. This is Di/tripeptide-binding protein 4 from Pseudomonas aeruginosa (strain UCBPP-PA14).